The sequence spans 429 residues: Enolase (429 aa).

Q165 contributes to the (2R)-2-phosphoglycerate binding site. E207 (proton donor) is an active-site residue. The Mg(2+) site is built by D244, E287, and D314. K339, R368, S369, and K390 together coordinate (2R)-2-phosphoglycerate. K339 functions as the Proton acceptor in the catalytic mechanism.

This sequence belongs to the enolase family. Requires Mg(2+) as cofactor.

The protein localises to the cytoplasm. Its subcellular location is the secreted. The protein resides in the cell surface. It carries out the reaction (2R)-2-phosphoglycerate = phosphoenolpyruvate + H2O. The protein operates within carbohydrate degradation; glycolysis; pyruvate from D-glyceraldehyde 3-phosphate: step 4/5. Its function is as follows. Catalyzes the reversible conversion of 2-phosphoglycerate (2-PG) into phosphoenolpyruvate (PEP). It is essential for the degradation of carbohydrates via glycolysis. This Roseiflexus castenholzii (strain DSM 13941 / HLO8) protein is Enolase.